A 329-amino-acid chain; its full sequence is Peroxidase 56 (329 aa).

Positions 1–31 are cleaved as a signal peptide; that stretch reads MAALKMTISCFLFLQVIYCLLSSFAPTNVQG. 4 disulfides stabilise this stretch: Cys41–Cys119, Cys74–Cys79, Cys125–Cys325, and Cys204–Cys236. Residue His72 is the Proton acceptor of the active site. Positions 73, 76, 78, 80, and 82 each coordinate Ca(2+). An N-linked (GlcNAc...) asparagine glycan is attached at Asn158. Pro167 serves as a coordination point for substrate. Asn172 carries N-linked (GlcNAc...) asparagine glycosylation. His197 lines the heme b pocket. Thr198 serves as a coordination point for Ca(2+). A glycan (N-linked (GlcNAc...) asparagine) is linked at Asn213. Ca(2+) is bound by residues Asp248, Ser251, and Asp256.

Belongs to the peroxidase family. Classical plant (class III) peroxidase subfamily. It depends on heme b as a cofactor. Requires Ca(2+) as cofactor.

Its subcellular location is the secreted. It catalyses the reaction 2 a phenolic donor + H2O2 = 2 a phenolic radical donor + 2 H2O. Its function is as follows. Removal of H(2)O(2), oxidation of toxic reductants, biosynthesis and degradation of lignin, suberization, auxin catabolism, response to environmental stresses such as wounding, pathogen attack and oxidative stress. These functions might be dependent on each isozyme/isoform in each plant tissue. The sequence is that of Peroxidase 56 (PER56) from Arabidopsis thaliana (Mouse-ear cress).